The primary structure comprises 167 residues: NAD(P)H-quinone oxidoreductase subunit I, chloroplastic (167 aa).

4Fe-4S ferredoxin-type domains are found at residues 55 to 84 (GRIH…VDWK) and 95 to 124 (LNYS…MTEE). Cys-64, Cys-67, Cys-70, Cys-74, Cys-104, Cys-107, Cys-110, and Cys-114 together coordinate [4Fe-4S] cluster.

It belongs to the complex I 23 kDa subunit family. In terms of assembly, NDH is composed of at least 16 different subunits, 5 of which are encoded in the nucleus. [4Fe-4S] cluster is required as a cofactor.

It localises to the plastid. Its subcellular location is the chloroplast thylakoid membrane. The catalysed reaction is a plastoquinone + NADH + (n+1) H(+)(in) = a plastoquinol + NAD(+) + n H(+)(out). The enzyme catalyses a plastoquinone + NADPH + (n+1) H(+)(in) = a plastoquinol + NADP(+) + n H(+)(out). NDH shuttles electrons from NAD(P)H:plastoquinone, via FMN and iron-sulfur (Fe-S) centers, to quinones in the photosynthetic chain and possibly in a chloroplast respiratory chain. The immediate electron acceptor for the enzyme in this species is believed to be plastoquinone. Couples the redox reaction to proton translocation, and thus conserves the redox energy in a proton gradient. This is NAD(P)H-quinone oxidoreductase subunit I, chloroplastic from Lepidium virginicum (Virginia pepperweed).